A 196-amino-acid chain; its full sequence is GTP cyclohydrolase-2 (196 aa).

49–53 is a binding site for GTP; that stretch reads RVHSE. Zn(2+)-binding residues include C54, C65, and C67. Residues Q70, 92–94, and T114 each bind GTP; that span reads EGR. Catalysis depends on D126, which acts as the Proton acceptor. R128 (nucleophile) is an active-site residue. GTP contacts are provided by T149 and K154.

Belongs to the GTP cyclohydrolase II family. As to quaternary structure, homodimer. Zn(2+) serves as cofactor.

It carries out the reaction GTP + 4 H2O = 2,5-diamino-6-hydroxy-4-(5-phosphoribosylamino)-pyrimidine + formate + 2 phosphate + 3 H(+). It participates in cofactor biosynthesis; riboflavin biosynthesis; 5-amino-6-(D-ribitylamino)uracil from GTP: step 1/4. Functionally, catalyzes the conversion of GTP to 2,5-diamino-6-ribosylamino-4(3H)-pyrimidinone 5'-phosphate (DARP), formate and pyrophosphate. The polypeptide is GTP cyclohydrolase-2 (Shigella dysenteriae serotype 1 (strain Sd197)).